The primary structure comprises 507 residues: MSIVSSGDILKILKERIEGFDSPVKTSSVGDVVAIKDGIALVYGLSGVKFGETVAFSSGVRGVVAGLERDTCSVVVFGEDREIREGDSVQCTGELMTVPAGLSVLGRVVNPLGSPVDGGNAIVADSRLPVEAKAPGIMARQPVCEPLQTGIKTVDMLIPIGRGQRELVIGDRKTGKTAIALDTIINQKKTNDTADAKNRMYCIYVAIGQKNSSIARVVHKLKETGAMDYTIVVAAGASDPVSIQYLAPYAACAMGEFFRDNGMHCLIVYDDLSKHAVAYRQMSLLLRRPPGREAYPGDVFYIHSRLLERAAKLSDDLGGGSLTALPIIETQAGDVSAYIPTNVISITDGQIFLESELFHKGFRPAINVGLSVSRVGSAAQVKSVKKVAGSMKLTLAQYRELEDFARFGSDLDPSSQAMLEKGRRFMELLKQGQYSPLSVEEQVAVVLAGADDCVNGIPVSEISKFERGLLERLRAEHGGLMSSLSADIADDIKGKLLEVIRGFAASF.

170–177 (GDRKTGKT) is an ATP binding site.

This sequence belongs to the ATPase alpha/beta chains family. As to quaternary structure, F-type ATPases have 2 components, CF(1) - the catalytic core - and CF(0) - the membrane proton channel. CF(1) has five subunits: alpha(3), beta(3), gamma(1), delta(1), epsilon(1). CF(0) has three main subunits: a(1), b(2) and c(9-12). The alpha and beta chains form an alternating ring which encloses part of the gamma chain. CF(1) is attached to CF(0) by a central stalk formed by the gamma and epsilon chains, while a peripheral stalk is formed by the delta and b chains.

Its subcellular location is the cell inner membrane. The enzyme catalyses ATP + H2O + 4 H(+)(in) = ADP + phosphate + 5 H(+)(out). Produces ATP from ADP in the presence of a proton gradient across the membrane. The alpha chain is a regulatory subunit. This is ATP synthase subunit alpha from Anaplasma marginale (strain Florida).